Consider the following 273-residue polypeptide: 4-hydroxy-tetrahydrodipicolinate reductase (273 aa).

Residues 11-16 (GALGRM) and 106-108 (GTT) contribute to the NAD(+) site. The Proton donor/acceptor role is filled by His162. His163 serves as a coordination point for (S)-2,3,4,5-tetrahydrodipicolinate. Lys166 (proton donor) is an active-site residue. 172–173 (GT) serves as a coordination point for (S)-2,3,4,5-tetrahydrodipicolinate.

It belongs to the DapB family.

The protein localises to the cytoplasm. The enzyme catalyses (S)-2,3,4,5-tetrahydrodipicolinate + NAD(+) + H2O = (2S,4S)-4-hydroxy-2,3,4,5-tetrahydrodipicolinate + NADH + H(+). The catalysed reaction is (S)-2,3,4,5-tetrahydrodipicolinate + NADP(+) + H2O = (2S,4S)-4-hydroxy-2,3,4,5-tetrahydrodipicolinate + NADPH + H(+). It functions in the pathway amino-acid biosynthesis; L-lysine biosynthesis via DAP pathway; (S)-tetrahydrodipicolinate from L-aspartate: step 4/4. Its function is as follows. Catalyzes the conversion of 4-hydroxy-tetrahydrodipicolinate (HTPA) to tetrahydrodipicolinate. This is 4-hydroxy-tetrahydrodipicolinate reductase from Synechococcus sp. (strain RCC307).